Here is a 224-residue protein sequence, read N- to C-terminus: 7-cyano-7-deazaguanine synthase (224 aa).

Residue 12 to 22 coordinates ATP; it reads LSGGLDSSTVT. 4 residues coordinate Zn(2+): cysteine 193, cysteine 201, cysteine 204, and cysteine 207.

It belongs to the QueC family. The cofactor is Zn(2+).

It carries out the reaction 7-carboxy-7-deazaguanine + NH4(+) + ATP = 7-cyano-7-deazaguanine + ADP + phosphate + H2O + H(+). It functions in the pathway purine metabolism; 7-cyano-7-deazaguanine biosynthesis. Functionally, catalyzes the ATP-dependent conversion of 7-carboxy-7-deazaguanine (CDG) to 7-cyano-7-deazaguanine (preQ(0)). This chain is 7-cyano-7-deazaguanine synthase, found in Prochlorococcus marinus (strain MIT 9312).